Reading from the N-terminus, the 663-residue chain is Bifunctional polymyxin resistance protein ArnA (663 aa).

Residues 1-307 (MSPKAVVFAY…EFGLVEGSQL (307 aa)) are formyltransferase ArnAFT. His106 (proton donor; for formyltransferase activity) is an active-site residue. (6R)-10-formyltetrahydrofolate contacts are provided by residues Arg116 and 138 to 142 (VKRAD). Positions 317-663 (RRTRVLILGV…EAMAEKADMR (347 aa)) are dehydrogenase ArnADH. NAD(+)-binding positions include Asp350 and 371-372 (DI). Residues Ala396, Tyr401, and 435 to 436 (TS) each bind UDP-alpha-D-glucuronate. Glu437 (proton acceptor; for decarboxylase activity) is an active-site residue. UDP-alpha-D-glucuronate is bound by residues Arg463, Asn494, 528 to 537 (RLVDGGAQKR), and Tyr615. The Proton donor; for decarboxylase activity role is filled by Arg621.

This sequence in the N-terminal section; belongs to the Fmt family. UDP-L-Ara4N formyltransferase subfamily. In the C-terminal section; belongs to the NAD(P)-dependent epimerase/dehydratase family. UDP-glucuronic acid decarboxylase subfamily. Homohexamer, formed by a dimer of trimers.

The catalysed reaction is UDP-alpha-D-glucuronate + NAD(+) = UDP-beta-L-threo-pentopyranos-4-ulose + CO2 + NADH. The enzyme catalyses UDP-4-amino-4-deoxy-beta-L-arabinose + (6R)-10-formyltetrahydrofolate = UDP-4-deoxy-4-formamido-beta-L-arabinose + (6S)-5,6,7,8-tetrahydrofolate + H(+). The protein operates within nucleotide-sugar biosynthesis; UDP-4-deoxy-4-formamido-beta-L-arabinose biosynthesis; UDP-4-deoxy-4-formamido-beta-L-arabinose from UDP-alpha-D-glucuronate: step 1/3. Its pathway is nucleotide-sugar biosynthesis; UDP-4-deoxy-4-formamido-beta-L-arabinose biosynthesis; UDP-4-deoxy-4-formamido-beta-L-arabinose from UDP-alpha-D-glucuronate: step 3/3. It functions in the pathway bacterial outer membrane biogenesis; lipopolysaccharide biosynthesis. In terms of biological role, bifunctional enzyme that catalyzes the oxidative decarboxylation of UDP-glucuronic acid (UDP-GlcUA) to UDP-4-keto-arabinose (UDP-Ara4O) and the addition of a formyl group to UDP-4-amino-4-deoxy-L-arabinose (UDP-L-Ara4N) to form UDP-L-4-formamido-arabinose (UDP-L-Ara4FN). The modified arabinose is attached to lipid A and is required for resistance to polymyxin and cationic antimicrobial peptides. This is Bifunctional polymyxin resistance protein ArnA from Pseudomonas savastanoi pv. phaseolicola (strain 1448A / Race 6) (Pseudomonas syringae pv. phaseolicola (strain 1448A / Race 6)).